A 158-amino-acid polypeptide reads, in one-letter code: Phosphopantetheine adenylyltransferase (158 aa).

S9 contributes to the substrate binding site. ATP contacts are provided by residues S9–F10 and H17. Residues K41, V73, and K87 each coordinate substrate. Residues G88–R90, E98, and Y122–S128 each bind ATP.

It belongs to the bacterial CoaD family. In terms of assembly, homohexamer. The cofactor is Mg(2+).

Its subcellular location is the cytoplasm. It carries out the reaction (R)-4'-phosphopantetheine + ATP + H(+) = 3'-dephospho-CoA + diphosphate. It participates in cofactor biosynthesis; coenzyme A biosynthesis; CoA from (R)-pantothenate: step 4/5. In terms of biological role, reversibly transfers an adenylyl group from ATP to 4'-phosphopantetheine, yielding dephospho-CoA (dPCoA) and pyrophosphate. This chain is Phosphopantetheine adenylyltransferase, found in Mycobacterium sp. (strain JLS).